Consider the following 178-residue polypeptide: Inorganic pyrophosphatase (178 aa).

K30, R44, and Y56 together coordinate substrate. 3 residues coordinate Mg(2+): D66, D71, and D103. Y140 lines the substrate pocket.

This sequence belongs to the PPase family. As to quaternary structure, homohexamer. Mg(2+) is required as a cofactor.

It is found in the cytoplasm. It catalyses the reaction diphosphate + H2O = 2 phosphate + H(+). Its function is as follows. Catalyzes the hydrolysis of inorganic pyrophosphate (PPi) forming two phosphate ions. The chain is Inorganic pyrophosphatase from Pyrococcus furiosus (strain ATCC 43587 / DSM 3638 / JCM 8422 / Vc1).